The chain runs to 73 residues: Somatostatin-2 (73 aa).

Residues 1-45 (SAGLLTQEWSAVEDLLAQMSLPEADAQRDAEMVSTATGGGRMNQE) constitute a propeptide that is removed on maturation. The tract at residues 23 to 58 (EADAQRDAEMVSTATGGGRMNQESIEPPNNLPPRER) is disordered. An intrachain disulfide couples cysteine 62 to cysteine 73.

This sequence belongs to the somatostatin family.

It localises to the secreted. Its function is as follows. Somatostatin inhibits the release of somatotropin. This Platichthys flesus (European flounder) protein is Somatostatin-2 (sst2).